The following is a 346-amino-acid chain: Ribosomal RNA small subunit methyltransferase H (346 aa).

Residues 46–48, Asp-63, Phe-90, Asp-113, and Gln-120 contribute to the S-adenosyl-L-methionine site; that span reads GGY. Residues 270–327 form a disordered region; that stretch reads GGSAGSRHMPETHMRLPSFTPAVKGAVGPTPEEEERNPRARSAKLRAGIRTENSPLED.

This sequence belongs to the methyltransferase superfamily. RsmH family.

It localises to the cytoplasm. The enzyme catalyses cytidine(1402) in 16S rRNA + S-adenosyl-L-methionine = N(4)-methylcytidine(1402) in 16S rRNA + S-adenosyl-L-homocysteine + H(+). In terms of biological role, specifically methylates the N4 position of cytidine in position 1402 (C1402) of 16S rRNA. This Brucella ovis (strain ATCC 25840 / 63/290 / NCTC 10512) protein is Ribosomal RNA small subunit methyltransferase H.